We begin with the raw amino-acid sequence, 753 residues long: Photosystem I P700 chlorophyll a apoprotein A1 (753 aa).

8 helical membrane-spanning segments follow: residues 72–95 (IFSA…FHGA), 158–181 (LYCT…FHYH), 197–221 (MNHH…HVSL), 293–311 (TAHH…GHMY), 350–373 (WHAQ…HHMY), 389–415 (LSLF…IFMV), 437–459 (AIIS…LYVH), and 534–552 (FMVH…LILL). Positions 576 and 585 each coordinate [4Fe-4S] cluster. Transmembrane regions (helical) follow at residues 592 to 613 (HVFL…HFSW) and 667 to 689 (LSAY…MFLF). Histidine 678 lines the chlorophyll a' pocket. The chlorophyll a site is built by methionine 686 and tyrosine 694. Tryptophan 695 contacts phylloquinone. The chain crosses the membrane as a helical span at residues 727 to 747 (AVGVAHYLLGGIVTTWAFFLA).

The protein belongs to the PsaA/PsaB family. As to quaternary structure, the PsaA/B heterodimer binds the P700 chlorophyll special pair and subsequent electron acceptors. PSI consists of a core antenna complex that captures photons, and an electron transfer chain that converts photonic excitation into a charge separation. The cyanobacterial PSI reaction center is composed of one copy each of PsaA,B,C,D,E,F,I,J,K,L,M and X, and forms trimeric complexes. The cofactor is PSI electron transfer chain: 5 chlorophyll a, 1 chlorophyll a', 2 phylloquinones and 3 4Fe-4S clusters. PSI core antenna: 90 chlorophyll a, 22 carotenoids, 3 phospholipids and 1 galactolipid. P700 is a chlorophyll a/chlorophyll a' dimer, A0 is one or more chlorophyll a, A1 is one or both phylloquinones and FX is a shared 4Fe-4S iron-sulfur center..

The protein localises to the cellular thylakoid membrane. The catalysed reaction is reduced [plastocyanin] + hnu + oxidized [2Fe-2S]-[ferredoxin] = oxidized [plastocyanin] + reduced [2Fe-2S]-[ferredoxin]. Its function is as follows. PsaA and PsaB bind P700, the primary electron donor of photosystem I (PSI), as well as the electron acceptors A0, A1 and FX. PSI is a plastocyanin/cytochrome c6-ferredoxin oxidoreductase, converting photonic excitation into a charge separation, which transfers an electron from the donor P700 chlorophyll pair to the spectroscopically characterized acceptors A0, A1, FX, FA and FB in turn. Oxidized P700 is reduced on the lumenal side of the thylakoid membrane by plastocyanin or cytochrome c6. This chain is Photosystem I P700 chlorophyll a apoprotein A1, found in Trichodesmium erythraeum (strain IMS101).